Reading from the N-terminus, the 317-residue chain is Glycine--tRNA ligase alpha subunit (317 aa).

The protein belongs to the class-II aminoacyl-tRNA synthetase family. Tetramer of two alpha and two beta subunits.

The protein localises to the cytoplasm. It catalyses the reaction tRNA(Gly) + glycine + ATP = glycyl-tRNA(Gly) + AMP + diphosphate. The protein is Glycine--tRNA ligase alpha subunit of Pseudomonas fluorescens (strain SBW25).